The sequence spans 381 residues: Formate dehydrogenase, mitochondrial (381 aa).

The transit peptide at 1–25 (MAMSRVASTAARAITSPSSLVFTRE) directs the protein to the mitochondrion. Substrate is bound by residues isoleucine 125 and asparagine 149. Residues threonine 150, 204-205 (RI), aspartate 224, 259-263 (PLTEK), asparagine 285, aspartate 311, and 335-338 (HISG) contribute to the NAD(+) site.

Belongs to the D-isomer specific 2-hydroxyacid dehydrogenase family. FDH subfamily. In terms of assembly, homodimer. As to expression, found at high levels in developing tubers, at intermediate level in stems, veins, stolons, and stamens, and at low level in leaves and roots.

The protein resides in the mitochondrion. It catalyses the reaction formate + NAD(+) = CO2 + NADH. Its function is as follows. Catalyzes the NAD(+)-dependent oxidation of formate to carbon dioxide. Involved in the cell stress response. Involved in formate-dependent oxygen uptake coupled to ATP synthesis. The polypeptide is Formate dehydrogenase, mitochondrial (Solanum tuberosum (Potato)).